The sequence spans 200 residues: RPW8-like protein 4 (200 aa).

Residues 1–157 (MPIAELAVIK…MKAIQVDQWT (157 aa)) form the RPW8 domain. The chain crosses the membrane as a helical span at residues 7–29 (AVIKTVGGPLIAAALGVGAQVIY). A coiled-coil region spans residues 70-127 (REVHESLTRLLEDAKSIIEKYWKLRWSRHVCRKYRYIKKLESIELELVRVAREIQVHQ).

It belongs to the plant RPW8 protein family.

The protein resides in the membrane. Functionally, probable disease resistance (R) protein. The polypeptide is RPW8-like protein 4 (HR4) (Arabidopsis thaliana (Mouse-ear cress)).